The chain runs to 136 residues: Histone H2B (136 aa).

The span at Met-1–Pro-10 shows a compositional bias: basic and acidic residues. The disordered stretch occupies residues Met-1–Arg-44. N6-acetyllysine; alternate occurs at positions 8 and 9. Glycyl lysine isopeptide (Lys-Gly) (interchain with G-Cter in SUMO); alternate cross-links involve residues Lys-8 and Lys-9. Lys-13 is subject to N6-acetyllysine. Position 23 is an N6-acetyllysine; alternate (Lys-23). Lys-23 participates in a covalent cross-link: Glycyl lysine isopeptide (Lys-Gly) (interchain with G-Cter in SUMO); alternate. A Glycyl lysine isopeptide (Lys-Gly) (interchain with G-Cter in SUMO) cross-link involves residue Lys-24. Residue Lys-130 forms a Glycyl lysine isopeptide (Lys-Gly) (interchain with G-Cter in ubiquitin) linkage.

Belongs to the histone H2B family. As to quaternary structure, the nucleosome is a histone octamer containing two molecules each of H2A, H2B, H3 and H4 assembled in one H3-H4 heterotetramer and two H2A-H2B heterodimers. The octamer wraps approximately 147 bp of DNA. Post-translationally, monoubiquitinated to form H2BK123ub1. H2BK123ub1 gives a specific tag for epigenetic transcriptional activation and is also prerequisite for H3K4me and H3K79me formation. H2BK123ub1 also modulates the formation of double-strand breaks during meiosis and is a prerequisite for DNA-damage checkpoint activation. Acetylated by GCN5 to form H2BK11ac and H2BK16ac. H2BK16ac can also be formed by ESA1. Acetylation of N-terminal lysines and particularly formation of H2BK11acK16ac has a positive effect on transcription. In terms of processing, sumoylation to form H2BK6su or H2BK7su, and probably also H2BK16su or H2BK17su, occurs preferentially near the telomeres and represses gene transcription.

The protein localises to the nucleus. Its subcellular location is the chromosome. Its function is as follows. Core component of nucleosome. Nucleosomes wrap and compact DNA into chromatin, limiting DNA accessibility to the cellular machineries which require DNA as a template. Histones thereby play a central role in transcription regulation, DNA repair, DNA replication and chromosomal stability. DNA accessibility is regulated via a complex set of post-translational modifications of histones, also called histone code, and nucleosome remodeling. The polypeptide is Histone H2B (hh2b) (Rosellinia necatrix (White root-rot fungus)).